Reading from the N-terminus, the 662-residue chain is Interleukin-12 receptor subunit beta-1 (662 aa).

The signal sequence occupies residues 1-23 (MEPLVTWVVPLLFLFLLSRQGAA). Over 24 to 545 (CRTSECCFQD…RFSIEVQVSD (522 aa)) the chain is Extracellular. Fibronectin type-III domains are found at residues 46–136 (GPRD…LYNS), 142–234 (PLGD…VPPE), 237–337 (PQPQ…IPAD), 338–444 (THTE…GNAS), and 448–542 (TPHH…IEVQ). Residues Cys52 and Cys62 are joined by a disulfide bond. Asn121 is a glycosylation site (N-linked (GlcNAc...) asparagine). Positions 222 to 226 (WSKWS) match the WSXWS motif motif. Asn329, Asn346, Asn352, Asn442, and Asn456 each carry an N-linked (GlcNAc...) asparagine glycan. Residues 546 to 570 (WLIFFASLGSFLSILLVGVLGYLGL) traverse the membrane as a helical segment. The Cytoplasmic segment spans residues 571-662 (NRAARHLCPP…EDGDRCKAKM (92 aa)). Positions 577–585 (LCPPLPTPC) match the Box 1 motif motif. Positions 626–637 (GERTEPLEKTEL) are enriched in basic and acidic residues. Positions 626–648 (GERTEPLEKTELPEGAPELALDT) are disordered.

Belongs to the type I cytokine receptor family. Type 2 subfamily. Dimer or oligomer; disulfide-linked. Interacts with IL12RB2 to form the high affinity IL12 receptor. Heterodimer with IL23R; in presence of IL23. The heterodimer forms the IL23 receptor.

The protein localises to the membrane. Its function is as follows. Functions as an interleukin receptor which binds interleukin-12 with low affinity and is involved in IL12 transduction. Associated with IL12RB2 it forms a functional, high affinity receptor for IL12. Also associates with IL23R to form the interleukin-23 receptor which functions in IL23 signal transduction probably through activation of the Jak-Stat signaling cascade. The chain is Interleukin-12 receptor subunit beta-1 (IL12RB1) from Homo sapiens (Human).